Consider the following 391-residue polypeptide: GATA-binding factor 6-B (391 aa).

Polar residues predominate over residues 57-69 (GTHSVNSHWSQAT). The segment at 57–107 (GTHSVNSHWSQATSESSSYSSSSPHPSSRYHYSPSPPMANGSTRDTGYSSS) is disordered. Low complexity predominate over residues 70-89 (SESSSYSSSSPHPSSRYHYS). Positions 96–107 (NGSTRDTGYSSS) are enriched in polar residues. GATA-type zinc fingers lie at residues 182–206 (CVNC…CNAC) and 236–260 (CANC…CNAC). Residues 277-334 (KEGIQTRKRKPKNLNKSKSSSSNGNSSHHITMTPTSTTSSTNSDDCIKNGSPSQNTAP) form a disordered region. Residues 282 to 291 (TRKRKPKNLN) show a composition bias toward basic residues. Low complexity predominate over residues 292 to 319 (KSKSSSSNGNSSHHITMTPTSTTSSTNS).

In embryos, expressed in the presumptive heart mesoderm. In adults, widely distributed but predominant in the heart.

It localises to the nucleus. In terms of biological role, transcriptional activator that binds 5'-GATA-3'-containing motifs within gene promoters. Regulates cardiac-specific transcription during embryogenesis and thereby cardiogenesis. The polypeptide is GATA-binding factor 6-B (gata6-b) (Xenopus laevis (African clawed frog)).